We begin with the raw amino-acid sequence, 1174 residues long: MANVEETVANVQRKIDREKALINAANAMRQSTNNPAVLSRLDGQIKDGRRNIDYFESKLRDLDLQRTTSGVDNMSLQPGRSPTNPLTPPPKDNWDGYAQQDQGGYGGPQSQYSQLSGGEALQPPRAPFAAPPPATANKRPNYSKLDLIKYDTPHLGPRIQLMLTQLEFKLSVEKQYKDGIEKMVRLYQMEGDRKSKQDAEAKRIESNQKIQLLKHSLKRYEDLHVDIDGDGDDNDSLDIPSQRKPLSGQLSLRIHAVADVDHAATGRFSRGPETFVNIKVEDTIKGRTKPTRNDRWTDEVHDFSIDKANEIEITVYDKTGDHLLPIGMLWVRISDIAEEMRRKKLETELANSGWVAADKMGGHTGIQPDMQFQPPPGQSPAGGPGGGPTPAGVRPPGAPQPQTGPIMIDDWFSLEPVGRIHLTMSFIKNTGNKQPFDLGLGRKGAVRQRKEDVVEQYGHKFVQQQFYNVMRCALCAEFLKYAAGMQCSDCNYTCHKKCYPKVVTKCITQSNAETDPDEAKLNHRIPHRFENFSNMGANWCCHCGYVLPLGRKQTKKCNECGLTCHAHCVHFVPDFCGMSMEVANQILMEIKRTRRGQSSSGPGMSQRTLRPQSAAKPLPPTQPQSPGQPGQESPTQSDRYSYGKEQMSPPPGPPRQPSYPSSATSVDAARASYSTTGTASTGAPTSPTSGSRPPSGPRTQSSVAAAAAAMNKATQPGYGRSNTDYSPQSGRSSGSGYPTEQRMSQQQAPQPAAYDPSVYANIPSYPPSHQQPAPVPSYPTKSSYPLPQPPPPQSPPQHPQQPTPSQQKMPEQQALTQQPPSAVGEVPGKKVTPAANTQGTGKRIGLDHFNFLAVLGKGNFGKVMLAETKTTKQLYAIKVLKKEFIIENDEVESTRSEKRVFLIANKERHPFLLNLHACFQTETRVYFVMEYISGGDLMLHIQRGQFGTKRAQFYAAEVCLALKYFHENGVIYRDLKLDNIMLTLDGHIKVADYGLCKEEMWYGSTTSTFCGTPEFMAPEILLDKKYGRAVDWWAFGVLIYQMLLQQSPFRGEDEDEIYDAILADEPLYPIHMPRDSVSILQKLLTREPEMRLGSGPTDAQEIMSHAFFRNINWDDIYHKRVQPPFIPQITSPTDTSNFDTEFTSVTPVLTPVQSVLSQAMQEEFRGFSYSADFA.

In terms of domain architecture, REM-1 1 spans 1-68 (MANVEETVAN…LRDLDLQRTT (68 aa)). Positions 69-84 (SGVDNMSLQPGRSPTN) are enriched in polar residues. The tract at residues 69-140 (SGVDNMSLQP…PPPATANKRP (72 aa)) is disordered. Residues 96 to 123 (GYAQQDQGGYGGPQSQYSQLSGGEALQP) show a composition bias toward low complexity. Residues 124-134 (PRAPFAAPPPA) show a composition bias toward pro residues. Positions 149–226 (KYDTPHLGPR…LKRYEDLHVD (78 aa)) constitute an REM-1 2 domain. The region spanning 229–349 (GDGDDNDSLD…MRRKKLETEL (121 aa)) is the C2 domain. The interval 358–406 (DKMGGHTGIQPDMQFQPPPGQSPAGGPGGGPTPAGVRPPGAPQPQTGPI) is disordered. Residues 380 to 389 (PAGGPGGGPT) show a composition bias toward gly residues. Phorbol-ester/DAG-type zinc fingers lie at residues 458 to 506 (GHKF…VTKC) and 526 to 576 (PHRF…PDFC). The interval 593 to 842 (TRRGQSSSGP…PAANTQGTGK (250 aa)) is disordered. Positions 596 to 611 (GQSSSGPGMSQRTLRP) are enriched in polar residues. Residues 624-636 (QSPGQPGQESPTQ) are compositionally biased toward low complexity. A compositionally biased stretch (pro residues) spans 648 to 657 (SPPPGPPRQP). Residues 658 to 709 (SYPSSATSVDAARASYSTTGTASTGAPTSPTSGSRPPSGPRTQSSVAAAAAA) are compositionally biased toward low complexity. A compositionally biased stretch (polar residues) spans 720–744 (RSNTDYSPQSGRSSGSGYPTEQRMS). Residues 786 to 802 (LPQPPPPQSPPQHPQQP) show a composition bias toward pro residues. Over residues 808–820 (KMPEQQALTQQPP) the composition is skewed to polar residues. One can recognise a Protein kinase domain in the interval 849 to 1108 (FNFLAVLGKG…AQEIMSHAFF (260 aa)). Residues 855-863 (LGKGNFGKV) and Lys878 contribute to the ATP site. Residue Asp974 is the Proton acceptor of the active site. The AGC-kinase C-terminal domain maps to 1109-1174 (RNINWDDIYH…RGFSYSADFA (66 aa)).

It belongs to the protein kinase superfamily. AGC Ser/Thr protein kinase family. PKC subfamily.

The catalysed reaction is L-seryl-[protein] + ATP = O-phospho-L-seryl-[protein] + ADP + H(+). The enzyme catalyses L-threonyl-[protein] + ATP = O-phospho-L-threonyl-[protein] + ADP + H(+). This Cochliobolus heterostrophus (Southern corn leaf blight fungus) protein is Protein kinase C-like (PKC1).